Consider the following 909-residue polypeptide: Coatomer subunit beta'-3 (909 aa).

WD repeat units lie at residues 13-52 (QRSE…ITKS), 55-94 (VTEL…KVKV), 97-136 (AHSD…ACTQ), 140-180 (GHSH…PNFT), 183-224 (AHQK…CVQT), 227-266 (GHTH…LENT), 269-309 (YGLE…ASMD), 351-390 (TCDL…RSFG), and 461-501 (QIDV…SHFD). A disordered region spans residues 862–909 (EENGHVENEGDEEEQQEEEVNEEEGVVDADSTDGAVLVNGSEVLTPHP). The span at 870–892 (EGDEEEQQEEEVNEEEGVVDADS) shows a compositional bias: acidic residues.

Belongs to the WD repeat COPB2 family. As to quaternary structure, oligomeric complex that consists of at least the alpha, beta, beta', gamma, delta, epsilon and zeta subunits.

The protein localises to the cytoplasm. Its subcellular location is the golgi apparatus membrane. It localises to the cytoplasmic vesicle. The protein resides in the COPI-coated vesicle membrane. Its function is as follows. The coatomer is a cytosolic protein complex that binds to dilysine motifs and reversibly associates with Golgi non-clathrin-coated vesicles, which further mediate biosynthetic protein transport from the ER, via the Golgi up to the trans Golgi network. Coatomer complex is required for budding from Golgi membranes, and is essential for the retrograde Golgi-to-ER transport of dilysine-tagged proteins. The protein is Coatomer subunit beta'-3 of Arabidopsis thaliana (Mouse-ear cress).